The sequence spans 147 residues: Phospholipase A2-beta (147 aa).

An N-terminal signal peptide occupies residues 1–28; the sequence is MMFRTSLMRFAAAFFAIVFVVLVGVARS. 6 disulfide bridges follow: C31–C58, C35–C64, C40–C117, C51–C71, C70–C95, and C77–C88. Ca(2+)-binding residues include Y50, G52, and H55. H74 is an active-site residue. D75 is a binding site for Ca(2+). A Prevents secretion from ER motif is present at residues 144–147; sequence KTEL.

This sequence belongs to the phospholipase A2 family. It depends on Ca(2+) as a cofactor. Ubiquitous but expressed at a low level. Detected in vascular tissues and in the guard cells. Predominantly detected in pollen.

The protein resides in the secreted. The protein localises to the endoplasmic reticulum. It catalyses the reaction a 1,2-diacyl-sn-glycero-3-phosphocholine + H2O = a 1-acyl-sn-glycero-3-phosphocholine + a fatty acid + H(+). Its activity is regulated as follows. Inhibited by aristolochic acid. In terms of biological role, PA2 catalyzes the calcium-dependent hydrolysis of the 2-acyl groups in 3-sn-phosphoglycerides. Releases lysophospholipids (LPLs) and free fatty acids (FFAs) from membrane phospholipids in response to hormones and other external stimuli. Regulates the process of cell elongation and plays important roles in shoot gravitropism by mediating auxin-induced cell elongation. Involved in stomatal opening in response to light. Plays a role in pollen development and germination and tube growth. In Arabidopsis thaliana (Mouse-ear cress), this protein is Phospholipase A2-beta (PLA2-BETA).